Reading from the N-terminus, the 617-residue chain is NADPH-dependent diflavin oxidoreductase 1 (617 aa).

A Flavodoxin-like domain is found at 3 to 147 (PMILYASETG…AFLPWLQQTL (145 aa)). FMN is bound by residues 9-14 (SETGNA), 56-59 (STHG), 94-103 (LGDSSYERFC), and glutamate 129. Residues 226–465 (DDWVWATLKK…HIASPTLFLP (240 aa)) form the FAD-binding FR-type domain. Residues 404–407 (RQFS) and 438–441 (GLCS) each bind FAD. Residues threonine 479, 534 to 535 (SR), and 540 to 544 (RIYVQ) contribute to the NADP(+) site. FAD is bound at residue tryptophan 617.

It belongs to the NADPH-dependent diflavin oxidoreductase NDOR1 family. In the N-terminal section; belongs to the flavodoxin family. The protein in the C-terminal section; belongs to the flavoprotein pyridine nucleotide cytochrome reductase family. In terms of assembly, interacts with DRE2; as part of the cytosolic iron-sulfur (Fe-S) protein assembly (CIA) machinery. FAD serves as cofactor. It depends on FMN as a cofactor.

It localises to the cytoplasm. The protein localises to the mitochondrion. It carries out the reaction 2 oxidized [2Fe-2S]-[protein] + NADPH = 2 reduced [2Fe-2S]-[protein] + NADP(+) + H(+). Functionally, NADPH-dependent reductase which is a central component of the cytosolic iron-sulfur (Fe-S) protein assembly (CIA) machinery. Transfers electrons from NADPH via its FAD and FMN prosthetic groups to the [2Fe-2S] cluster of DRE2, another key component of the CIA machinery. In turn, this reduced cluster provides electrons for assembly of cytosolic iron-sulfur cluster proteins. Positively controls H(2)O(2)-induced cell death. The chain is NADPH-dependent diflavin oxidoreductase 1 from Cryptococcus neoformans var. neoformans serotype D (strain B-3501A) (Filobasidiella neoformans).